Here is an 877-residue protein sequence, read N- to C-terminus: Phosphoenolpyruvate carboxylase (877 aa).

Active-site residues include His138 and Lys544.

The protein belongs to the PEPCase type 1 family. The cofactor is Mg(2+).

The catalysed reaction is oxaloacetate + phosphate = phosphoenolpyruvate + hydrogencarbonate. In terms of biological role, forms oxaloacetate, a four-carbon dicarboxylic acid source for the tricarboxylic acid cycle. The polypeptide is Phosphoenolpyruvate carboxylase (Vibrio vulnificus (strain YJ016)).